A 266-amino-acid chain; its full sequence is Putative carbamate hydrolase RutD (266 aa).

An AB hydrolase-1 domain is found at 14–119 (PVVVLSAGLG…LVNGWLSLSP (106 aa)).

It belongs to the AB hydrolase superfamily. Hydrolase RutD family.

The catalysed reaction is carbamate + 2 H(+) = NH4(+) + CO2. Involved in pyrimidine catabolism. May facilitate the hydrolysis of carbamate, a reaction that can also occur spontaneously. The sequence is that of Putative carbamate hydrolase RutD from Klebsiella pneumoniae subsp. pneumoniae (strain ATCC 700721 / MGH 78578).